Reading from the N-terminus, the 130-residue chain is MAKLSTDELLDAFKEMTLLELSEFVKQFEETFDVTAAAPVAVAAAGPAAGGGAAEAAEEQSEFDVILEGAGEKKIGVIKVVREIVSGLGLKEAKDLVDSAPKPLLEKVNKEAAEDAKAKLEAAGASVTVK.

It belongs to the bacterial ribosomal protein bL12 family. As to quaternary structure, homodimer. Part of the ribosomal stalk of the 50S ribosomal subunit. Forms a multimeric L10(L12)X complex, where L10 forms an elongated spine to which 2 to 4 L12 dimers bind in a sequential fashion. Binds GTP-bound translation factors.

In terms of biological role, forms part of the ribosomal stalk which helps the ribosome interact with GTP-bound translation factors. Is thus essential for accurate translation. The chain is Large ribosomal subunit protein bL12 from Mycolicibacterium gilvum (strain PYR-GCK) (Mycobacterium gilvum (strain PYR-GCK)).